A 591-amino-acid chain; its full sequence is Aspartate--tRNA(Asp/Asn) ligase (591 aa).

Residue Glu-176 participates in L-aspartate binding. An aspartate region spans residues Gln-200–Lys-203. Arg-222 serves as a coordination point for L-aspartate. ATP-binding positions include Arg-222–Glu-224 and Gln-231. His-450 lines the L-aspartate pocket. Glu-484 lines the ATP pocket. Residue Arg-491 coordinates L-aspartate. Gly-536–Arg-539 is a binding site for ATP.

It belongs to the class-II aminoacyl-tRNA synthetase family. Type 1 subfamily. As to quaternary structure, homodimer.

Its subcellular location is the cytoplasm. It carries out the reaction tRNA(Asx) + L-aspartate + ATP = L-aspartyl-tRNA(Asx) + AMP + diphosphate. Functionally, aspartyl-tRNA synthetase with relaxed tRNA specificity since it is able to aspartylate not only its cognate tRNA(Asp) but also tRNA(Asn). Reaction proceeds in two steps: L-aspartate is first activated by ATP to form Asp-AMP and then transferred to the acceptor end of tRNA(Asp/Asn). This chain is Aspartate--tRNA(Asp/Asn) ligase, found in Bacillus cereus (strain B4264).